The chain runs to 445 residues: DDB1- and CUL4-associated factor 13 (445 aa).

WD repeat units lie at residues 64–104 (GHRD…CSRT), 107–146 (AHDGFVRGLCVRFCGTSFFTVGDDKTVKQWAMESPGYGEK), 152–191 (TILGKTVFTGIDHHVKDAVFATCGQQVDIWDEQRSAPMRS), 194–234 (WGVD…PLKK), 236–276 (ILEM…SPVK), 280–319 (DHVSAVLDVDYSPTGKELVSASFDKSIRIFPVQSGHSREV), and 323–362 (KRMQHVTCVRWSADNKYVLCGSDEMNIRIWKANASEKLGV). A required for nucleolar location region spans residues 353 to 441 (KANASEKLGV…IPSEKKKHVL (89 aa)). Composition is skewed to basic residues over residues 413–426 (ARRKKDVNRRKHSK) and 436–445 (KKKHVLAVVE). The segment at 413–445 (ARRKKDVNRRKHSKPGSVPIPSEKKKHVLAVVE) is disordered.

It belongs to the WD repeat DCAF13/WDSOF1 family. In terms of assembly, part of the small subunit (SSU) processome, composed of more than 70 proteins and the RNA chaperone small nucleolar RNA (snoRNA) U3. Component of the DCX(DCAF13) E3 ubiquitin ligase complex, at least composed of CUL4 (CUL4A or CUL4B), DDB1, DCAF13 and RBX1.

Its subcellular location is the nucleus. The protein localises to the nucleolus. It participates in protein modification; protein ubiquitination. Its function is as follows. Part of the small subunit (SSU) processome, first precursor of the small eukaryotic ribosomal subunit. During the assembly of the SSU processome in the nucleolus, many ribosome biogenesis factors, an RNA chaperone and ribosomal proteins associate with the nascent pre-rRNA and work in concert to generate RNA folding, modifications, rearrangements and cleavage as well as targeted degradation of pre-ribosomal RNA by the RNA exosome. In terms of biological role, substrate-recognition component of a DCX (DDB1-CUL4-X-box) E3 ubiquitin-protein ligase complex. The polypeptide is DDB1- and CUL4-associated factor 13 (dcaf13) (Xenopus laevis (African clawed frog)).